The chain runs to 700 residues: Polyribonucleotide nucleotidyltransferase (700 aa).

Residues D484 and D490 each coordinate Mg(2+). The 60-residue stretch at 551–610 (PRVIRMVVDPEKIREIIGPGGKTISKIIAETGVKIDIEEDGRLYITASDLRSGERAKQMI) folds into the KH domain. Positions 620–688 (GEIYLGKVLR…KLGRISLSRK (69 aa)) constitute an S1 motif domain.

This sequence belongs to the polyribonucleotide nucleotidyltransferase family. Mg(2+) serves as cofactor.

It is found in the cytoplasm. The enzyme catalyses RNA(n+1) + phosphate = RNA(n) + a ribonucleoside 5'-diphosphate. Functionally, involved in mRNA degradation. Catalyzes the phosphorolysis of single-stranded polyribonucleotides processively in the 3'- to 5'-direction. The chain is Polyribonucleotide nucleotidyltransferase from Thermoanaerobacter sp. (strain X514).